The following is a 364-amino-acid chain: DNA polymerase IV (364 aa).

The UmuC domain maps to Ile14–Gly198. Residues Asp18 and Asp116 each coordinate Mg(2+). Residue Glu117 is part of the active site.

This sequence belongs to the DNA polymerase type-Y family. In terms of assembly, monomer. Mg(2+) serves as cofactor.

It localises to the cytoplasm. The catalysed reaction is DNA(n) + a 2'-deoxyribonucleoside 5'-triphosphate = DNA(n+1) + diphosphate. Functionally, poorly processive, error-prone DNA polymerase involved in untargeted mutagenesis. Copies undamaged DNA at stalled replication forks, which arise in vivo from mismatched or misaligned primer ends. These misaligned primers can be extended by PolIV. Exhibits no 3'-5' exonuclease (proofreading) activity. May be involved in translesional synthesis, in conjunction with the beta clamp from PolIII. The chain is DNA polymerase IV from Streptococcus pyogenes serotype M6 (strain ATCC BAA-946 / MGAS10394).